Reading from the N-terminus, the 382-residue chain is Protein MSN1 (382 aa).

The segment at 12–26 is leucine-zipper; the sequence is LNENEAILTNRVAEL. 2 stretches are compositionally biased toward polar residues: residues 104–114 and 122–138; these read TLDPQGFTDGT and NYTS…HPQN. Disordered regions lie at residues 104–138 and 155–260; these read TLDP…HPQN and NSQE…EEEQ. The segment covering 162–180 has biased composition (low complexity); sequence SQQQTNSSNSISQENNSTN. Composition is skewed to polar residues over residues 181 to 198 and 207 to 221; these read PSVD…SNLV and NPPN…GLYI. The segment covering 222–231 has biased composition (low complexity); the sequence is SSNSSQSRQS. A compositionally biased stretch (polar residues) spans 232–253; sequence PNLQKVSPNHENAVESNAQESV. A Nuclear localization signal motif is present at residues 266-271; the sequence is GLKRKR.

It localises to the nucleus. May function as a transcriptional activator. Increased dosage of MSN1 restores invertase expression in yeast mutants defective in the SNF1 protein kinase, and msn1 disruption reduced derepression of invertase in the wild-type. May affect SUC2 expression. Expression of MSN1 enhances growth in iron-limiting conditions. The protein is Protein MSN1 (MSN1) of Saccharomyces cerevisiae (strain ATCC 204508 / S288c) (Baker's yeast).